Consider the following 970-residue polypeptide: Insulin-degrading enzyme-like 1, peroxisomal (970 aa).

Residue His69 coordinates Zn(2+). Residue Glu72 is the Proton acceptor of the active site. Zn(2+) is bound at residue His73. The active site involves Glu143. Residue Glu150 participates in Zn(2+) binding.

The protein belongs to the peptidase M16 family. Requires Zn(2+) as cofactor.

The protein localises to the peroxisome. In terms of biological role, peptidase that might be involved in pathogen or wound response. Not required for peroxisome biogenesis, indole-3-butyric acid (IBA) metabolism, fatty acid beta-oxidation or degradation of glyoxylate cycle enzymes during seedling development. This chain is Insulin-degrading enzyme-like 1, peroxisomal (PXM16), found in Arabidopsis thaliana (Mouse-ear cress).